A 448-amino-acid chain; its full sequence is tRNA modification GTPase MnmE (448 aa).

(6S)-5-formyl-5,6,7,8-tetrahydrofolate contacts are provided by Arg24, Glu81, and Lys120. Residues 216–373 (GLNVVLVGAP…LKRTLLREAG (158 aa)) form the TrmE-type G domain. Residue Asn226 participates in K(+) binding. GTP-binding positions include 226 to 231 (NVGKSS), 245 to 251 (TDIAGTT), and 270 to 273 (DTAG). Position 230 (Ser230) interacts with Mg(2+). Positions 245, 247, and 250 each coordinate K(+). Thr251 contributes to the Mg(2+) binding site. Residue Lys448 participates in (6S)-5-formyl-5,6,7,8-tetrahydrofolate binding.

This sequence belongs to the TRAFAC class TrmE-Era-EngA-EngB-Septin-like GTPase superfamily. TrmE GTPase family. Homodimer. Heterotetramer of two MnmE and two MnmG subunits. It depends on K(+) as a cofactor.

The protein resides in the cytoplasm. Exhibits a very high intrinsic GTPase hydrolysis rate. Involved in the addition of a carboxymethylaminomethyl (cmnm) group at the wobble position (U34) of certain tRNAs, forming tRNA-cmnm(5)s(2)U34. The sequence is that of tRNA modification GTPase MnmE from Neisseria meningitidis serogroup A / serotype 4A (strain DSM 15465 / Z2491).